The sequence spans 104 residues: DNA-directed RNA polymerase subunit omega (104 aa).

The protein belongs to the RNA polymerase subunit omega family. The RNAP catalytic core consists of 2 alpha, 1 beta, 1 beta' and 1 omega subunit. When a sigma factor is associated with the core the holoenzyme is formed, which can initiate transcription.

The enzyme catalyses RNA(n) + a ribonucleoside 5'-triphosphate = RNA(n+1) + diphosphate. Its function is as follows. Promotes RNA polymerase assembly. Latches the N- and C-terminal regions of the beta' subunit thereby facilitating its interaction with the beta and alpha subunits. This is DNA-directed RNA polymerase subunit omega from Streptococcus agalactiae serotype Ia (strain ATCC 27591 / A909 / CDC SS700).